The following is a 298-amino-acid chain: tRNA dimethylallyltransferase (298 aa).

ATP is bound at residue G10–S17. T12–S17 contacts substrate. Residues D35–Q38 form an interaction with substrate tRNA region.

This sequence belongs to the IPP transferase family. In terms of assembly, monomer. It depends on Mg(2+) as a cofactor.

The catalysed reaction is adenosine(37) in tRNA + dimethylallyl diphosphate = N(6)-dimethylallyladenosine(37) in tRNA + diphosphate. Functionally, catalyzes the transfer of a dimethylallyl group onto the adenine at position 37 in tRNAs that read codons beginning with uridine, leading to the formation of N6-(dimethylallyl)adenosine (i(6)A). The chain is tRNA dimethylallyltransferase from Picosynechococcus sp. (strain ATCC 27264 / PCC 7002 / PR-6) (Agmenellum quadruplicatum).